The chain runs to 261 residues: Cytochrome c oxidase subunit 2 (261 aa).

Residues 1-34 (MSFTGIFHFFTNSPCDAAEPWQLGSQDAATPMMQ) are Mitochondrial intermembrane-facing. Residues 35 to 55 (GIIDLHHDIFFFLILILVFVS) traverse the membrane as a helical segment. Topologically, residues 56–87 (RILVRALWHFHSKKNPIPQRIVHGTTIEILRT) are mitochondrial matrix. The helical transmembrane segment at 88–108 (IFPSIIPMFIAIPSFALLYSM) threads the bilayer. Topologically, residues 109-261 (DEVVVDPAMT…NQLIPQTGEA (153 aa)) are mitochondrial intermembrane. Cu cation-binding residues include His-188, Cys-223, Glu-225, Cys-227, and His-231. Glu-225 contributes to the Mg(2+) binding site.

It belongs to the cytochrome c oxidase subunit 2 family. Component of the cytochrome c oxidase (complex IV, CIV), a multisubunit enzyme composed of a catalytic core of 3 subunits and several supernumerary subunits. The complex exists as a monomer or a dimer and forms supercomplexes (SCs) in the inner mitochondrial membrane with ubiquinol-cytochrome c oxidoreductase (cytochrome b-c1 complex, complex III, CIII). Requires Cu cation as cofactor.

It localises to the mitochondrion inner membrane. It carries out the reaction 4 Fe(II)-[cytochrome c] + O2 + 8 H(+)(in) = 4 Fe(III)-[cytochrome c] + 2 H2O + 4 H(+)(out). Component of the cytochrome c oxidase, the last enzyme in the mitochondrial electron transport chain which drives oxidative phosphorylation. The respiratory chain contains 3 multisubunit complexes succinate dehydrogenase (complex II, CII), ubiquinol-cytochrome c oxidoreductase (cytochrome b-c1 complex, complex III, CIII) and cytochrome c oxidase (complex IV, CIV), that cooperate to transfer electrons derived from NADH and succinate to molecular oxygen, creating an electrochemical gradient over the inner membrane that drives transmembrane transport and the ATP synthase. Cytochrome c oxidase is the component of the respiratory chain that catalyzes the reduction of oxygen to water. Electrons originating from reduced cytochrome c in the intermembrane space (IMS) are transferred via the dinuclear copper A center (CU(A)) of subunit 2 and heme A of subunit 1 to the active site in subunit 1, a binuclear center (BNC) formed by heme A3 and copper B (CU(B)). The BNC reduces molecular oxygen to 2 water molecules using 4 electrons from cytochrome c in the IMS and 4 protons from the mitochondrial matrix. The polypeptide is Cytochrome c oxidase subunit 2 (COX2) (Daucus carota (Wild carrot)).